The primary structure comprises 521 residues: Sodium/hydrogen exchanger 5 (521 aa).

Residues methionine 1–alanine 23 are Cytoplasmic-facing. A helical membrane pass occupies residues glycine 24–leucine 44. The Lumenal portion of the chain corresponds to arginine 45 to arginine 48. A helical transmembrane segment spans residues phenylalanine 49–alanine 69. Topologically, residues asparagine 70–glutamate 86 are cytoplasmic. The helical intramembrane region spans glutamate 87–proline 107. At lysine 108–glycine 115 the chain is on the cytoplasmic side. Residues alanine 116–valine 136 traverse the membrane as a helical segment. At tyrosine 137–serine 141 the chain is on the lumenal side. 2 intramembrane regions (helical) span residues methionine 142–alanine 162 and valine 166–phenylalanine 186. The Lumenal portion of the chain corresponds to glycine 187–arginine 222. Residues phenylalanine 223–leucine 243 form a helical membrane-spanning segment. Residues leucine 244–tyrosine 271 lie on the Cytoplasmic side of the membrane. The helical transmembrane segment at methionine 272–methionine 292 threads the bilayer. Residues lysine 293–serine 310 lie on the Lumenal side of the membrane. An N-linked (GlcNAc...) asparagine glycan is attached at asparagine 299. Residues phenylalanine 311–isoleucine 331 form a helical membrane-spanning segment. Residues alanine 332–histidine 340 lie on the Cytoplasmic side of the membrane. The helical transmembrane segment at valine 341 to glycine 361 threads the bilayer. Topologically, residues cysteine 362–lysine 382 are lumenal. The helical transmembrane segment at alanine 383–leucine 402 threads the bilayer. Topologically, residues histidine 403 to glutamine 411 are cytoplasmic. A helical membrane pass occupies residues isoleucine 412 to threonine 432. The Lumenal segment spans residues glycine 433 to glutamate 521. The disordered stretch occupies residues glycine 453–glycine 480. Low complexity predominate over residues serine 467–glycine 480.

Belongs to the monovalent cation:proton antiporter 1 (CPA1) transporter (TC 2.A.36) family. In terms of tissue distribution, expressed in roots, leaves, stems, flowers and siliques. Detected at low levels in roots and shoots.

Its subcellular location is the endosome membrane. It is found in the golgi apparatus. It localises to the trans-Golgi network membrane. The protein resides in the golgi stack membrane. The enzyme catalyses Na(+)(in) + H(+)(out) = Na(+)(out) + H(+)(in). The catalysed reaction is K(+)(in) + H(+)(out) = K(+)(out) + H(+)(in). In terms of biological role, involved in trafficking to the vacuole. Required for cell proliferation and cell expansion, but not for cell differentiation. Acts in low affinity electroneutral exchange of protons for cations such as Na(+) or K(+) across membranes. May also exchange Li(+) and Cs(+) with a lower affinity. This is Sodium/hydrogen exchanger 5 (NHX5) from Arabidopsis thaliana (Mouse-ear cress).